Here is a 98-residue protein sequence, read N- to C-terminus: Large ribosomal subunit protein uL23 (98 aa).

Belongs to the universal ribosomal protein uL23 family. In terms of assembly, part of the 50S ribosomal subunit. Contacts protein L29, and trigger factor when it is bound to the ribosome.

In terms of biological role, one of the early assembly proteins it binds 23S rRNA. One of the proteins that surrounds the polypeptide exit tunnel on the outside of the ribosome. Forms the main docking site for trigger factor binding to the ribosome. This chain is Large ribosomal subunit protein uL23, found in Hydrogenovibrio crunogenus (strain DSM 25203 / XCL-2) (Thiomicrospira crunogena).